Consider the following 354-residue polypeptide: Homeobox-leucine zipper protein HOX27 (354 aa).

The tract at residues 98–175 (SVAAGAPGME…DDEGASARKK (78 aa)) is disordered. Over residues 148–157 (QGGGGGGGGE) the composition is skewed to gly residues. A DNA-binding region (homeobox) is located at residues 171 to 230 (SARKKLRLSKEQSAFLEESFKEHSTLNPKQKVALAKQLNLRPRQVEVWFQNRRARTKLKQ). The interval 229–273 (KQTEVDCEYLKRCCETLTEENRRLHKELAELRALKTARPFYMHLP) is leucine-zipper. The segment at 294–323 (STSAPAAATSPAAAPTAAARTAVASPEPHR) is disordered.

The protein belongs to the HD-ZIP homeobox family. Class II subfamily. As to expression, expressed in seedlings, roots, stems, leaf sheaths and blades and panicles.

The protein localises to the nucleus. In terms of biological role, probable transcription factor. The protein is Homeobox-leucine zipper protein HOX27 (HOX27) of Oryza sativa subsp. japonica (Rice).